We begin with the raw amino-acid sequence, 251 residues long: Triosephosphate isomerase, glycosomal (251 aa).

The substrate site is built by Asn12 and Lys14. The active-site Electrophile is the His96. Catalysis depends on Glu168, which acts as the Proton acceptor.

This sequence belongs to the triosephosphate isomerase family. In terms of assembly, homodimer.

It is found in the glycosome. It carries out the reaction D-glyceraldehyde 3-phosphate = dihydroxyacetone phosphate. The protein operates within carbohydrate biosynthesis; gluconeogenesis. It functions in the pathway carbohydrate degradation; glycolysis; D-glyceraldehyde 3-phosphate from glycerone phosphate: step 1/1. The protein is Triosephosphate isomerase, glycosomal of Trypanosoma cruzi.